The primary structure comprises 60 residues: Large ribosomal subunit protein bL32 (60 aa).

Residues Met1 to Lys21 form a disordered region. Basic residues predominate over residues His7–Tyr20.

Belongs to the bacterial ribosomal protein bL32 family.

The polypeptide is Large ribosomal subunit protein bL32 (Streptococcus equi subsp. zooepidemicus (strain H70)).